We begin with the raw amino-acid sequence, 382 residues long: ATP phosphoribosyltransferase regulatory subunit (382 aa).

The protein belongs to the class-II aminoacyl-tRNA synthetase family. HisZ subfamily. As to quaternary structure, heteromultimer composed of HisG and HisZ subunits.

The protein localises to the cytoplasm. It participates in amino-acid biosynthesis; L-histidine biosynthesis; L-histidine from 5-phospho-alpha-D-ribose 1-diphosphate: step 1/9. Required for the first step of histidine biosynthesis. May allow the feedback regulation of ATP phosphoribosyltransferase activity by histidine. The chain is ATP phosphoribosyltransferase regulatory subunit from Lacticaseibacillus paracasei (strain ATCC 334 / BCRC 17002 / CCUG 31169 / CIP 107868 / KCTC 3260 / NRRL B-441) (Lactobacillus paracasei).